A 485-amino-acid polypeptide reads, in one-letter code: Sperm-associated antigen 8 (485 aa).

Disordered stretches follow at residues 1 to 42 (METN…SPRS), 75 to 98 (KTPAPCSEFMEPSSDPSLLGEPCA), and 127 to 215 (TTTD…CIPP). Residues 132-150 (SSNPGPVPGSSSGPVLGSS) are compositionally biased toward low complexity. Gly residues predominate over residues 151–191 (SGAGHGSGSGSGPGCGSVPGSGSGPGPGSGPGSGPGHGSGS). Mn stretches follow at residues 327–340 (SSTTQKDSYQPPGN) and 379–393 (ESVTHHDYRMELAQA).

This sequence belongs to the SPAG8 family. As to quaternary structure, microtubule inner protein component of sperm flagellar doublet microtubules. Interacts with FHL5 (via second LIM domain). Interacts with RANBP9. Expressed in testis (germ cells), but not in liver, kidney, prostate and small intestine. Expressed in airway epithelial cells.

It localises to the cytoplasm. Its subcellular location is the nucleus. It is found in the cytoplasmic vesicle. The protein localises to the secretory vesicle. The protein resides in the acrosome. It localises to the cytoskeleton. Its subcellular location is the microtubule organizing center. It is found in the spindle. The protein localises to the cilium axoneme. The protein resides in the flagellum axoneme. Functionally, microtubule inner protein (MIP) part of the dynein-decorated doublet microtubules (DMTs) in cilia axoneme, which is required for motile cilia beating. Plays a role in spermatogenesis by enhancing the binding of CREM isoform tau to its coactivator FHL5 and increasing the FHL5-regulated transcriptional activation of CREM isoform tau. Involved in the acrosome reaction and in binding of sperm to the zona pellucida. Plays a role in regulation of the cell cycle by controlling progression through the G2/M phase, possibly by delaying the activation of CDK1 which is required for entry into mitosis. May play a role in fertility and microtubule formation through interaction with RANBP9. This Homo sapiens (Human) protein is Sperm-associated antigen 8.